Here is a 292-residue protein sequence, read N- to C-terminus: Ribosomal protein L11 methyltransferase (292 aa).

T143, G164, D186, and N228 together coordinate S-adenosyl-L-methionine.

Belongs to the methyltransferase superfamily. PrmA family.

The protein localises to the cytoplasm. The catalysed reaction is L-lysyl-[protein] + 3 S-adenosyl-L-methionine = N(6),N(6),N(6)-trimethyl-L-lysyl-[protein] + 3 S-adenosyl-L-homocysteine + 3 H(+). In terms of biological role, methylates ribosomal protein L11. The polypeptide is Ribosomal protein L11 methyltransferase (Aeromonas hydrophila subsp. hydrophila (strain ATCC 7966 / DSM 30187 / BCRC 13018 / CCUG 14551 / JCM 1027 / KCTC 2358 / NCIMB 9240 / NCTC 8049)).